The following is a 318-amino-acid chain: MEKYDLAIIGAGPVGLFAASFANLHGLKTITFDALDEVGGQINMLYPQKDIKDIPAFSSIKGKELVSRLFEQTENTKLTLSHKVKKISFSTGEDIIIDDDYQVKSLLIATGLGAFKPKTLPLSTTPELQAHIHYSMQHPEIFSNKKVAILGGGDSALDWALELSKTSDVYVVHRRNEFRGLESSVSQLKSLKNVELLTPYLPKELHLNNNRIELVLHRVGASHDFITKDVDEILVAYGFKSDNRQLRKWGIELENNLISVSQTMQTNLPHVYAIGDAITYPGRVPMIALGFGEAQIAISSIMQDLFPEKTMTFHSTSI.

The FAD site is built by Asp-33, Gln-41, Tyr-46, Val-84, Phe-115, Asp-276, and Thr-316.

It belongs to the ferredoxin--NADP reductase type 2 family. As to quaternary structure, homodimer. FAD serves as cofactor.

It catalyses the reaction 2 reduced [2Fe-2S]-[ferredoxin] + NADP(+) + H(+) = 2 oxidized [2Fe-2S]-[ferredoxin] + NADPH. In Lactobacillus johnsonii (strain CNCM I-12250 / La1 / NCC 533), this protein is Ferredoxin--NADP reductase.